A 463-amino-acid polypeptide reads, in one-letter code: Cysteine--tRNA ligase (463 aa).

C27 is a binding site for Zn(2+). The 'HIGH' region motif lies at 29-39; it reads ATVQGLPHIGH. Zn(2+) is bound by residues C205, H230, and E234. The 'KMSKS' region motif lies at 261–265; the sequence is KMSKS. K264 lines the ATP pocket.

This sequence belongs to the class-I aminoacyl-tRNA synthetase family. Monomer. The cofactor is Zn(2+).

It is found in the cytoplasm. The catalysed reaction is tRNA(Cys) + L-cysteine + ATP = L-cysteinyl-tRNA(Cys) + AMP + diphosphate. The polypeptide is Cysteine--tRNA ligase (Mycolicibacterium vanbaalenii (strain DSM 7251 / JCM 13017 / BCRC 16820 / KCTC 9966 / NRRL B-24157 / PYR-1) (Mycobacterium vanbaalenii)).